Reading from the N-terminus, the 169-residue chain is Crossover junction endodeoxyribonuclease RuvC (169 aa).

Residues aspartate 13, glutamate 73, and aspartate 145 contribute to the active site. Mg(2+)-binding residues include aspartate 13, glutamate 73, and aspartate 145.

It belongs to the RuvC family. Homodimer which binds Holliday junction (HJ) DNA. The HJ becomes 2-fold symmetrical on binding to RuvC with unstacked arms; it has a different conformation from HJ DNA in complex with RuvA. In the full resolvosome a probable DNA-RuvA(4)-RuvB(12)-RuvC(2) complex forms which resolves the HJ. The cofactor is Mg(2+).

The protein localises to the cytoplasm. The enzyme catalyses Endonucleolytic cleavage at a junction such as a reciprocal single-stranded crossover between two homologous DNA duplexes (Holliday junction).. Its function is as follows. The RuvA-RuvB-RuvC complex processes Holliday junction (HJ) DNA during genetic recombination and DNA repair. Endonuclease that resolves HJ intermediates. Cleaves cruciform DNA by making single-stranded nicks across the HJ at symmetrical positions within the homologous arms, yielding a 5'-phosphate and a 3'-hydroxyl group; requires a central core of homology in the junction. The consensus cleavage sequence is 5'-(A/T)TT(C/G)-3'. Cleavage occurs on the 3'-side of the TT dinucleotide at the point of strand exchange. HJ branch migration catalyzed by RuvA-RuvB allows RuvC to scan DNA until it finds its consensus sequence, where it cleaves and resolves the cruciform DNA. The protein is Crossover junction endodeoxyribonuclease RuvC of Solidesulfovibrio magneticus (strain ATCC 700980 / DSM 13731 / RS-1) (Desulfovibrio magneticus).